Reading from the N-terminus, the 305-residue chain is Uridylate cyclase (305 aa).

Asp-58 and Asp-102 together coordinate Mn(2+).

It belongs to the adenylyl cyclase class-4/guanylyl cyclase family. Pyrimidine cyclase subfamily. In terms of assembly, homodimer. Requires Mn(2+) as cofactor.

Its subcellular location is the cytoplasm. It catalyses the reaction GTP = 3',5'-cyclic GMP + diphosphate. The enzyme catalyses UTP = 3',5'-cyclic UMP + diphosphate. Pycsar (pyrimidine cyclase system for antiphage resistance) provides immunity against bacteriophage. The pyrimidine cyclase (PycC) synthesizes cyclic nucleotides in response to infection; these serve as specific second messenger signals. The signals activate the adjacent effector, leading to bacterial cell death and abortive phage infection. A clade D Pycsar system. Its function is as follows. The pyrimidine cyclase gene of a two-gene Pycsar system, generates cyclic UMP (cUMP) from UTP as well as cGMP from GTP to a lesser extent, has little to no activity on ATP or CTP. Expression of this and adjacent effector MePycTM (AC A0A1C5G2D0) probably confers resistance to bacteriophage. The genes are probably only expressed in response to bacteriophage infection. The sequence is that of Uridylate cyclase from Micromonospora echinofusca.